Consider the following 95-residue polypeptide: Protein TusB (95 aa).

Belongs to the DsrH/TusB family. In terms of assembly, heterohexamer, formed by a dimer of trimers. The hexameric TusBCD complex contains 2 copies each of TusB, TusC and TusD. The TusBCD complex interacts with TusE.

Its subcellular location is the cytoplasm. In terms of biological role, part of a sulfur-relay system required for 2-thiolation of 5-methylaminomethyl-2-thiouridine (mnm(5)s(2)U) at tRNA wobble positions. This is Protein TusB from Salmonella arizonae (strain ATCC BAA-731 / CDC346-86 / RSK2980).